Consider the following 214-residue polypeptide: Octanoyltransferase (214 aa).

Residues 32–207 (EDTLDEIWLV…NLLALLNHPP (176 aa)) enclose the BPL/LPL catalytic domain. Residues 71-78 (RGGQVTYH), 138-140 (SLG), and 151-153 (GLA) each bind substrate. Cysteine 169 (acyl-thioester intermediate) is an active-site residue.

The protein belongs to the LipB family.

The protein resides in the cytoplasm. The enzyme catalyses octanoyl-[ACP] + L-lysyl-[protein] = N(6)-octanoyl-L-lysyl-[protein] + holo-[ACP] + H(+). Its pathway is protein modification; protein lipoylation via endogenous pathway; protein N(6)-(lipoyl)lysine from octanoyl-[acyl-carrier-protein]: step 1/2. Functionally, catalyzes the transfer of endogenously produced octanoic acid from octanoyl-acyl-carrier-protein onto the lipoyl domains of lipoate-dependent enzymes. Lipoyl-ACP can also act as a substrate although octanoyl-ACP is likely to be the physiological substrate. In Klebsiella pneumoniae subsp. pneumoniae (strain ATCC 700721 / MGH 78578), this protein is Octanoyltransferase.